We begin with the raw amino-acid sequence, 342 residues long: Polygalacturonase inhibitor 2 (342 aa).

A signal peptide spans 1–29 (MTQFNIPVTMSSSLSIILVILVSLSTAHS). Intrachain disulfides connect Cys32-Cys62 and Cys63-Cys72. The N-linked (GlcNAc...) (complex) asparagine glycan is linked to Asn64. LRR repeat units lie at residues 82 to 107 (NNLDLSGLNLPKPYPIPSSLANLPYL), 108 to 132 (NFLYIGGINNLVGPIPPAIAKLTQL), 133 to 156 (HYLYITHTNVSGAIPDFLSQIKTL), 157 to 180 (VTLDFSYNALSGTLPPSISSLPNL), 181 to 205 (VGITFDGNRISGAIPDSYGSFSKLF), 206 to 228 (TSMTISRNRLTGKIPPTFANLNL), 229 to 252 (AFVDLSRNMLEGDASVLFGSDKNT), 253 to 275 (QKIHLAKNSLAFDLGKVGLSKNL), 276 to 299 (NGLDLRNNRIYGTLPQGLTQLKFL), and 300 to 319 (HSLNVSFNNLCGEIPQGGNL). An N-linked (GlcNAc...) (complex) asparagine glycan is attached at Asn141. N-linked (GlcNAc...) asparagine glycosylation occurs at Asn303. 2 disulfides stabilise this stretch: Cys310/Cys332 and Cys334/Cys341.

It belongs to the polygalacturonase-inhibiting protein family. Asn-303 is not glycosylated.

It is found in the secreted. The protein resides in the cell wall. The protein localises to the membrane. In terms of biological role, inhibitor of fungal polygalacturonase. It is an important factor for plant resistance to phytopathogenic fungi. Inhibits all polygalacturonases (PG) tested, with the exception of PG from F.oxysporum which was only inhibited at 60%. In Phaseolus vulgaris (Kidney bean), this protein is Polygalacturonase inhibitor 2 (PGIP2).